The following is a 1883-amino-acid chain: Lysophospholipase NTE1 (1883 aa).

Over 1–75 the chain is Cytoplasmic; it reads MSQVPVASPA…LLRVVLASLN (75 aa). The helical transmembrane segment at 76-96 threads the bilayer; it reads LIRILATFSTITVPSLVYAIL. The Lumenal segment spans residues 97–103; the sequence is HYSLTLQ. A helical membrane pass occupies residues 104 to 124; that stretch reads LNFPSLALLFLTSLISAFIWL. The Cytoplasmic segment spans residues 125-1883; it reads RYRHLNKYER…AGISARRNSI (1759 aa). Disordered regions lie at residues 284-327, 355-410, 618-693, 716-764, 921-1069, and 1084-1108; these read HLAP…FNPP, ERLG…LYHA, SQRS…MVGP, SAQP…RKGS, EEDR…ATNS, and LHQQ…GKRS. The span at 311 to 327 shows a compositional bias: polar residues; it reads NNATAPTSPYSSAFNPP. The segment covering 372–383 has biased composition (low complexity); it reads ARTASSGTASAT. Residues 650-668 are compositionally biased toward polar residues; that stretch reads PSLTTSSKQSNQKPTSSRI. A nucleoside 3',5'-cyclic phosphate is bound by residues 863-1158 and 1166-1285; these read AGHG…RRPI and RLLS…IARR. Positions 936–948 are enriched in polar residues; that stretch reads TDASSGSSRQNRP. The span at 964-974 shows a compositional bias: basic and acidic residues; that stretch reads LLDERNLREAD. 2 stretches are compositionally biased toward polar residues: residues 988 to 998 and 1084 to 1100; these read ISSNGDGNSGS and LHQQ…QSSQ. Residues 1544–1708 form the PNPLA domain; that stretch reads LVLGGGGARG…VDNLPVTVML (165 aa). The GXGXXG signature appears at 1548 to 1553; it reads GGGARG. The GXSXG signature appears at 1575-1579; the sequence is GTSIG. Ser1577 functions as the Nucleophile in the catalytic mechanism. The Proton acceptor role is filled by Asp1695. Residues 1695–1697 carry the DGA/G motif; the sequence is DGG. A disordered region spans residues 1852–1883; the sequence is DESGVGGGVRKIRKKRRRTRRKAGISARRNSI. Residues 1861 to 1874 show a composition bias toward basic residues; that stretch reads RKIRKKRRRTRRKA.

This sequence belongs to the NTE family.

The protein localises to the endoplasmic reticulum membrane. The enzyme catalyses a 1-acyl-sn-glycero-3-phosphocholine + H2O = sn-glycerol 3-phosphocholine + a fatty acid + H(+). With respect to regulation, inhibited by organophosphorus esters. Intracellular phospholipase B that catalyzes the double deacylation of phosphatidylcholine (PC) to glycerophosphocholine (GroPCho). Plays an important role in membrane lipid homeostasis. Responsible for the rapid PC turnover in response to inositol, elevated temperatures, or when choline is present in the growth medium. The chain is Lysophospholipase NTE1 (NTE1) from Mycosarcoma maydis (Corn smut fungus).